Consider the following 370-residue polypeptide: tRNA-specific 2-thiouridylase MnmA (370 aa).

Residues Ala6–Ser13 and Leu32 each bind ATP. Cys101 acts as the Nucleophile in catalysis. Cysteines 101 and 193 form a disulfide. Gly125 is an ATP binding site. The interval Lys143–Gln145 is interaction with tRNA. Catalysis depends on Cys193, which acts as the Cysteine persulfide intermediate.

This sequence belongs to the MnmA/TRMU family.

It is found in the cytoplasm. The catalysed reaction is S-sulfanyl-L-cysteinyl-[protein] + uridine(34) in tRNA + AH2 + ATP = 2-thiouridine(34) in tRNA + L-cysteinyl-[protein] + A + AMP + diphosphate + H(+). Its function is as follows. Catalyzes the 2-thiolation of uridine at the wobble position (U34) of tRNA, leading to the formation of s(2)U34. The chain is tRNA-specific 2-thiouridylase MnmA from Rhodococcus erythropolis (strain PR4 / NBRC 100887).